We begin with the raw amino-acid sequence, 162 residues long: UPF0260 protein Atu0932 (162 aa).

It belongs to the UPF0260 family.

This is UPF0260 protein Atu0932 from Agrobacterium fabrum (strain C58 / ATCC 33970) (Agrobacterium tumefaciens (strain C58)).